A 305-amino-acid polypeptide reads, in one-letter code: GPI-anchored hemophore cfmA (305 aa).

A signal peptide spans 1-18; it reads MKASVSLLLLSAASMASA. A CFEM domain is found at 19-111; that stretch reads AMSVSQCAQM…GSGSGSDSGS (93 aa). 4 cysteine pairs are disulfide-bonded: Cys25–Cys68, Cys29–Cys63, Cys42–Cys49, and Cys51–Cys84. A heme-binding site is contributed by Asp46. The interval 92–287 is disordered; the sequence is TATGAGGSSS…STGNVAPRGA (196 aa). The segment covering 95–149 has biased composition (gly residues); it reads GAGGSSSGSGSGSDSGSGSGSGSGSGSGSGSGSGSSSGSGSGSGSGSGSGSGSNS. Low complexity-rich tracts occupy residues 150–186, 196–259, and 267–287; these read GSGS…NSTT, GASS…TATG, and GSAS…PRGA. N-linked (GlcNAc...) asparagine glycans are attached at residues Asn183, Asn203, Asn237, Asn243, and Asn275. A lipid anchor (GPI-like-anchor amidated serine) is attached at Ser276. A propeptide spans 277–305 (removed in mature form); that stretch reads SSTGNVAPRGAVVGSGAVGALALAALIIL.

This sequence belongs to the RBT5 family. Post-translationally, the GPI-like anchor contains a phosphoceramide lipid group. In terms of processing, the GPI-anchor is attached to the protein in the endoplasmic reticulum and serves to target the protein to the cell surface. There, the glucosamine-inositol phospholipid moiety is cleaved off and the GPI-modified mannoprotein is covalently attached via its lipidless GPI glycan remnant to the 1,6-beta-glucan of the outer cell wall layer.

The protein resides in the secreted. The protein localises to the cell wall. Its subcellular location is the cell membrane. Its function is as follows. GPI-anchored cell wall protein involved in stabilizing the cell wall. Not implicated in virulence, heme uptake and biofilm formation. The polypeptide is GPI-anchored hemophore cfmA (Aspergillus fumigatus (strain ATCC MYA-4609 / CBS 101355 / FGSC A1100 / Af293) (Neosartorya fumigata)).